The following is a 293-amino-acid chain: Formamidopyrimidine-DNA glycosylase (293 aa).

The Schiff-base intermediate with DNA role is filled by Pro2. The Proton donor role is filled by Glu3. Lys60 functions as the Proton donor; for beta-elimination activity in the catalytic mechanism. Residues His110, Arg129, and Arg174 each contribute to the DNA site. The FPG-type zinc finger occupies 259 to 293 (NVYRRTGKECRKCGNLIERKKISGRSTHWCPKCQK). The active-site Proton donor; for delta-elimination activity is the Arg283.

Belongs to the FPG family. As to quaternary structure, monomer. Zn(2+) serves as cofactor.

The catalysed reaction is Hydrolysis of DNA containing ring-opened 7-methylguanine residues, releasing 2,6-diamino-4-hydroxy-5-(N-methyl)formamidopyrimidine.. It carries out the reaction 2'-deoxyribonucleotide-(2'-deoxyribose 5'-phosphate)-2'-deoxyribonucleotide-DNA = a 3'-end 2'-deoxyribonucleotide-(2,3-dehydro-2,3-deoxyribose 5'-phosphate)-DNA + a 5'-end 5'-phospho-2'-deoxyribonucleoside-DNA + H(+). Involved in base excision repair of DNA damaged by oxidation or by mutagenic agents. Acts as a DNA glycosylase that recognizes and removes damaged bases. Has a preference for oxidized purines, such as 7,8-dihydro-8-oxoguanine (8-oxoG). Has AP (apurinic/apyrimidinic) lyase activity and introduces nicks in the DNA strand. Cleaves the DNA backbone by beta-delta elimination to generate a single-strand break at the site of the removed base with both 3'- and 5'-phosphates. The protein is Formamidopyrimidine-DNA glycosylase of Prochlorococcus marinus (strain MIT 9215).